A 365-amino-acid chain; its full sequence is Forkhead box protein H1 (365 aa).

The interval 1–29 is disordered; that stretch reads MGPCSGSRLGPPEAESPSQPPKRRKKRYL. Residues 32–128 constitute a DNA-binding region (fork-head); the sequence is DKPPYTYLAM…ALRLQNTALC (97 aa). Residues 151-215 form a disordered region; sequence GRPYRPPSPP…TPPLPSSERP (65 aa). The span at 154 to 164 shows a compositional bias: pro residues; the sequence is YRPPSPPPPPS. An SMAD-interaction domain (SID) region spans residues 273–354; it reads LWGQLPTSYL…VSHPRDLAAP (82 aa). Positions 277–281 match the Fast/FoxH1 motif 1 (FM1) motif; that stretch reads LPTSY. The Fast/FoxH1 motif 2 (FM2) motif lies at 287-293; sequence PNVVMPL. The SMAD interaction motif (SIM) motif lies at 327–348; that stretch reads LDALFQGVPPNKSIYDVWVSHP.

As to quaternary structure, interacts with the MH2 domains of SMAD2 and SMAD3. Ubiquitous.

It localises to the nucleus. Transcriptional activator. Recognizes and binds to the DNA sequence 5'-TGT[GT][GT]ATT-3'. Required for induction of the goosecoid (GSC) promoter by TGF-beta or activin signaling. Forms a transcriptionally active complex containing FOXH1/SMAD2/SMAD4 on a site on the GSC promoter called TARE (TGF-beta/activin response element). The chain is Forkhead box protein H1 (FOXH1) from Homo sapiens (Human).